The sequence spans 105 residues: Pyrimidine/purine nucleoside phosphorylase (105 aa).

Belongs to the nucleoside phosphorylase PpnP family.

It catalyses the reaction a purine D-ribonucleoside + phosphate = a purine nucleobase + alpha-D-ribose 1-phosphate. The catalysed reaction is adenosine + phosphate = alpha-D-ribose 1-phosphate + adenine. The enzyme catalyses cytidine + phosphate = cytosine + alpha-D-ribose 1-phosphate. It carries out the reaction guanosine + phosphate = alpha-D-ribose 1-phosphate + guanine. It catalyses the reaction inosine + phosphate = alpha-D-ribose 1-phosphate + hypoxanthine. The catalysed reaction is thymidine + phosphate = 2-deoxy-alpha-D-ribose 1-phosphate + thymine. The enzyme catalyses uridine + phosphate = alpha-D-ribose 1-phosphate + uracil. It carries out the reaction xanthosine + phosphate = alpha-D-ribose 1-phosphate + xanthine. In terms of biological role, catalyzes the phosphorolysis of diverse nucleosides, yielding D-ribose 1-phosphate and the respective free bases. Can use uridine, adenosine, guanosine, cytidine, thymidine, inosine and xanthosine as substrates. Also catalyzes the reverse reactions. This Clostridioides difficile (strain 630) (Peptoclostridium difficile) protein is Pyrimidine/purine nucleoside phosphorylase.